The sequence spans 266 residues: Glucosamine-6-phosphate deaminase (266 aa).

Asp-72 functions as the Proton acceptor; for enolization step in the catalytic mechanism. Residue Asp-141 is the For ring-opening step of the active site. His-143 functions as the Proton acceptor; for ring-opening step in the catalytic mechanism. Residue Glu-148 is the For ring-opening step of the active site.

It belongs to the glucosamine/galactosamine-6-phosphate isomerase family. NagB subfamily. As to quaternary structure, homohexamer.

The catalysed reaction is alpha-D-glucosamine 6-phosphate + H2O = beta-D-fructose 6-phosphate + NH4(+). It functions in the pathway amino-sugar metabolism; N-acetylneuraminate degradation; D-fructose 6-phosphate from N-acetylneuraminate: step 5/5. Allosterically activated by N-acetylglucosamine 6-phosphate (GlcNAc6P). Functionally, catalyzes the reversible isomerization-deamination of glucosamine 6-phosphate (GlcN6P) to form fructose 6-phosphate (Fru6P) and ammonium ion. This Erwinia tasmaniensis (strain DSM 17950 / CFBP 7177 / CIP 109463 / NCPPB 4357 / Et1/99) protein is Glucosamine-6-phosphate deaminase.